The primary structure comprises 1347 residues: Protein HUA2-LIKE 3 (1347 aa).

The 58-residue stretch at 24–81 (VGDLVLAKVKGFPAWPAVVDEPEKWGHSADSKKVTVHFFGTQQIAFCNHGDVESFTEE) folds into the PWWP domain. Disordered regions lie at residues 110–137 (KLKQ…TSQL), 251–320 (DGGP…SGSK), and 383–402 (DSCQ…PCEE). Positions 127 to 137 (TAGSSGNTSQL) are enriched in polar residues. Residues 302 to 314 (VESNNNSRNEGNG) are compositionally biased toward low complexity. The segment covering 390-402 (NSHERLNERPCEE) has biased composition (basic and acidic residues). Positions 845-986 (DVQCTVESFE…HHIRELDSLS (142 aa)) constitute a CID domain. Disordered stretches follow at residues 1037–1069 (RDED…VTPS), 1121–1140 (TSHQ…QNAQ), 1147–1223 (YSNG…YSYM), and 1259–1347 (RMRP…WHQR). The segment covering 1038 to 1049 (DEDEGSDSDGGD) has biased composition (acidic residues). The segment covering 1054 to 1069 (TPEHESRSLEEHVTPS) has biased composition (basic and acidic residues). A compositionally biased stretch (polar residues) spans 1181–1191 (PSYSSRVSLSK). Positions 1208 to 1217 (SSHPPPPPPS) are enriched in pro residues. Residues 1259–1272 (RMRPEPCENRDNWR) are compositionally biased toward basic and acidic residues.

As to expression, expressed throughout young primordia, and vegetative and reproductive apices.

The protein resides in the nucleus. Probable transcription factor that acts with partial redundancy with HULK1 and HULK2. Plays diverse and essential roles in the control of plant development, physiology and flowering time. In Arabidopsis thaliana (Mouse-ear cress), this protein is Protein HUA2-LIKE 3.